The chain runs to 534 residues: Cytochrome P450 monooxygenase btcB (534 aa).

Residue Asn20 is glycosylated (N-linked (GlcNAc...) asparagine). The chain crosses the membrane as a helical span at residues 41-61 (ALAFLCGALLFGFVYSVFYNL). Residues Asn335, Asn413, and Asn431 are each glycosylated (N-linked (GlcNAc...) asparagine). Residue Cys484 participates in heme binding.

It belongs to the cytochrome P450 family. Requires heme as cofactor.

The protein resides in the membrane. Its pathway is secondary metabolite biosynthesis; terpenoid biosynthesis. Its function is as follows. Cytochrome P4590 monooxygenase part of the gene cluster that mediates the biosynthesis of betaestacins. The bifunctional terpene synthase btcA converts isopentenyl diphosphate (IPP) and dimethylallyl diphosphate (DMAPP) into the sesterterpene betaestacin I. The C-terminal prenyltransferase (PT) domain of btcA catalyzes formation of GFPP, whereas the N-terminal terpene cyclase (TC) domain catalyzes the cyclization of GFPP into betaestacin I. The cytochrome P450 monooxygenase btcB oxidizes the C25 methyl group of betaestacin I to yield the carboxylic acid betaestacin IV via the alcohol betaestacin III. The cytochrome P450 monooxygenase btcC further catalyzes the multistep oxidation of betaestacin IV to produce several compounds, including betaestacins Va, Vb, Vc and VI. The sequence is that of Cytochrome P450 monooxygenase btcB from Colletotrichum orbiculare (strain 104-T / ATCC 96160 / CBS 514.97 / LARS 414 / MAFF 240422) (Cucumber anthracnose fungus).